Here is a 131-residue protein sequence, read N- to C-terminus: Putative pre-16S rRNA nuclease (131 aa).

This sequence belongs to the YqgF nuclease family.

Its subcellular location is the cytoplasm. Could be a nuclease involved in processing of the 5'-end of pre-16S rRNA. This chain is Putative pre-16S rRNA nuclease, found in Bordetella petrii (strain ATCC BAA-461 / DSM 12804 / CCUG 43448).